A 406-amino-acid chain; its full sequence is Glucose-1-phosphate adenylyltransferase (406 aa).

Residues Tyr100, Gly165, 181–182 (EK), and Ser199 each bind alpha-D-glucose 1-phosphate.

It belongs to the bacterial/plant glucose-1-phosphate adenylyltransferase family. In terms of assembly, homotetramer.

The enzyme catalyses alpha-D-glucose 1-phosphate + ATP + H(+) = ADP-alpha-D-glucose + diphosphate. Its pathway is glycan biosynthesis; glycogen biosynthesis. Functionally, involved in the biosynthesis of ADP-glucose, a building block required for the elongation reactions to produce glycogen. Catalyzes the reaction between ATP and alpha-D-glucose 1-phosphate (G1P) to produce pyrophosphate and ADP-Glc. The chain is Glucose-1-phosphate adenylyltransferase from Streptomyces avermitilis (strain ATCC 31267 / DSM 46492 / JCM 5070 / NBRC 14893 / NCIMB 12804 / NRRL 8165 / MA-4680).